An 84-amino-acid polypeptide reads, in one-letter code: Putative UPF0320 protein YAL068W-A (84 aa).

It belongs to the UPF0320 family.

This Saccharomyces cerevisiae (strain ATCC 204508 / S288c) (Baker's yeast) protein is Putative UPF0320 protein YAL068W-A.